The chain runs to 130 residues: Small ribosomal subunit protein uS9 (130 aa).

Belongs to the universal ribosomal protein uS9 family.

The protein is Small ribosomal subunit protein uS9 (rpsI) of Shigella flexneri.